An 834-amino-acid polypeptide reads, in one-letter code: DNA polymerase I, thermostable (834 aa).

One can recognise a 5'-3' exonuclease domain in the interval 176–262 (RPEQWVDFRA…DLPLEVDLAQ (87 aa)). Residues 412–834 (ERLHRNLLKR…MGEDWLSAKG (423 aa)) are polymerase.

Belongs to the DNA polymerase type-A family.

It catalyses the reaction DNA(n) + a 2'-deoxyribonucleoside 5'-triphosphate = DNA(n+1) + diphosphate. Its function is as follows. In addition to polymerase activity, this DNA polymerase exhibits 5'-3' exonuclease activity. This Thermus thermophilus (strain ATCC 27634 / DSM 579 / HB8) protein is DNA polymerase I, thermostable (polA).